Here is an 87-residue protein sequence, read N- to C-terminus: Large ribosomal subunit protein bL31B (87 aa).

The protein belongs to the bacterial ribosomal protein bL31 family. Type B subfamily. Part of the 50S ribosomal subunit.

The chain is Large ribosomal subunit protein bL31B from Klebsiella pneumoniae (strain 342).